The sequence spans 126 residues: Aspartate 1-decarboxylase (126 aa).

S25 functions as the Schiff-base intermediate with substrate; via pyruvic acid in the catalytic mechanism. S25 carries the pyruvic acid (Ser) modification. Position 57 (T57) interacts with substrate. Y58 (proton donor) is an active-site residue. 73 to 75 (GAA) lines the substrate pocket.

The protein belongs to the PanD family. Heterooctamer of four alpha and four beta subunits. Pyruvate is required as a cofactor. In terms of processing, is synthesized initially as an inactive proenzyme, which is activated by self-cleavage at a specific serine bond to produce a beta-subunit with a hydroxyl group at its C-terminus and an alpha-subunit with a pyruvoyl group at its N-terminus.

It is found in the cytoplasm. The catalysed reaction is L-aspartate + H(+) = beta-alanine + CO2. Its pathway is cofactor biosynthesis; (R)-pantothenate biosynthesis; beta-alanine from L-aspartate: step 1/1. Catalyzes the pyruvoyl-dependent decarboxylation of aspartate to produce beta-alanine. The protein is Aspartate 1-decarboxylase of Psychrobacter arcticus (strain DSM 17307 / VKM B-2377 / 273-4).